The following is an 852-amino-acid chain: Bifunctional isopimaradiene synthase, chloroplastic (852 aa).

A chloroplast-targeting transit peptide spans 1-53 (HHLTANTQSIPHFSTTLNAGSSARKRRSLYLRWGKGSNKIIACVGEGATSVPY). Lysine 252 contributes to the substrate binding site. Residues aspartate 385 and aspartate 387 each coordinate Mg(2+). The short motif at 385–388 (DIDD) is the DXDD motif element. Lysine 472 contacts substrate. Residues aspartate 604, aspartate 608, asparagine 748, threonine 752, and glutamate 756 each coordinate Mg(2+). The DDXXD motif signature appears at 604–608 (DDLYD).

It belongs to the terpene synthase family. Tpsd subfamily. Mg(2+) is required as a cofactor.

It localises to the plastid. The protein resides in the chloroplast. It carries out the reaction (2E,6E,10E)-geranylgeranyl diphosphate = (+)-copalyl diphosphate. The enzyme catalyses (+)-copalyl diphosphate = isopimara-7,15-diene + diphosphate. It functions in the pathway terpene metabolism; oleoresin biosynthesis. Functionally, involved in defensive oleoresin formation in conifers in response to insect attack or other injury. Involved in diterpene (C20) olefins biosynthesis. Bifunctional enzyme that catalyzes two sequential cyclizations of geranylgeranyl diphosphate (GGPP) to isopimara-7,15-diene. In Abies balsamea (Balsam fir), this protein is Bifunctional isopimaradiene synthase, chloroplastic (TPS-ISO).